The chain runs to 218 residues: Hypoxanthine-guanine phosphoribosyltransferase (218 aa).

K69 is a binding site for GMP. K103 carries the post-translational modification N6-acetyllysine. Residue K115 forms a Glycyl lysine isopeptide (Lys-Gly) (interchain with G-Cter in SUMO1); alternate linkage. K115 participates in a covalent cross-link: Glycyl lysine isopeptide (Lys-Gly) (interchain with G-Cter in SUMO2); alternate. Residues 134 to 142 (EDIIDTGKT), K166, 186 to 188 (KFV), and D194 each bind GMP. The active-site Proton acceptor is D138. The residue at position 142 (T142) is a Phosphothreonine. Mg(2+) is bound at residue D194.

It belongs to the purine/pyrimidine phosphoribosyltransferase family. As to quaternary structure, homotetramer. Mg(2+) serves as cofactor.

The protein localises to the cytoplasm. It carries out the reaction IMP + diphosphate = hypoxanthine + 5-phospho-alpha-D-ribose 1-diphosphate. The catalysed reaction is GMP + diphosphate = guanine + 5-phospho-alpha-D-ribose 1-diphosphate. The protein operates within purine metabolism; IMP biosynthesis via salvage pathway; IMP from hypoxanthine: step 1/1. Converts guanine to guanosine monophosphate, and hypoxanthine to inosine monophosphate. Transfers the 5-phosphoribosyl group from 5-phosphoribosylpyrophosphate onto the purine. Plays a central role in the generation of purine nucleotides through the purine salvage pathway. This chain is Hypoxanthine-guanine phosphoribosyltransferase (Hprt1), found in Mus musculus (Mouse).